The sequence spans 991 residues: Integrator complex subunit 8 (991 aa).

Over residues 1–10 (MSAEAADREA) the composition is skewed to basic and acidic residues. The tract at residues 1-22 (MSAEAADREAATSSRPCTPPQT) is disordered. A compositionally biased stretch (polar residues) spans 11–22 (ATSSRPCTPPQT). Residues 24–29 (WFEFLL) carry the WFEF motif motif. TPR repeat units follow at residues 250–288 (CQGC…VSKI), 319–355 (SQPA…SLPD), 569–602 (VYIL…VTEF), and 829–862 (HSWL…CSDF).

Belongs to the Integrator subunit 8 family. As to quaternary structure, component of the Integrator complex, composed of core subunits INTS1, INTS2, INTS3, INTS4, INTS5, INTS6, INTS7, INTS8, INTS9/RC74, INTS10, INTS11/CPSF3L, INTS12, INTS13, INTS14 and INTS15. The core complex associates with protein phosphatase 2A subunits PPP2CA and PPP2R1A, to form the Integrator-PP2A (INTAC) complex.

It is found in the nucleus. The protein resides in the chromosome. Its function is as follows. Component of the integrator complex, a multiprotein complex that terminates RNA polymerase II (Pol II) transcription in the promoter-proximal region of genes. The integrator complex provides a quality checkpoint during transcription elongation by driving premature transcription termination of transcripts that are unfavorably configured for transcriptional elongation: the complex terminates transcription by (1) catalyzing dephosphorylation of the C-terminal domain (CTD) of Pol II subunit POLR2A/RPB1 and SUPT5H/SPT5, (2) degrading the exiting nascent RNA transcript via endonuclease activity and (3) promoting the release of Pol II from bound DNA. The integrator complex is also involved in terminating the synthesis of non-coding Pol II transcripts, such as enhancer RNAs (eRNAs), small nuclear RNAs (snRNAs), telomerase RNAs and long non-coding RNAs (lncRNAs). Within the integrator complex, INTS8 is required for the recruitment of protein phosphatase 2A (PP2A) to transcription pause-release checkpoint. The sequence is that of Integrator complex subunit 8 (ints8) from Xenopus laevis (African clawed frog).